The chain runs to 485 residues: Betaine aldehyde dehydrogenase (485 aa).

Residues Thr23, Ile24, and Asp90 each coordinate K(+). 147–149 (GAW) provides a ligand contact to NAD(+). The active-site Charge relay system is Lys159. Residues 173-176 (KPSE) and 226-229 (EVGT) each bind NAD(+). K(+) is bound at residue Leu241. Glu247 acts as the Proton acceptor in catalysis. Gly249, Cys281, and Glu382 together coordinate NAD(+). Cys281 acts as the Nucleophile in catalysis. Cys281 carries the post-translational modification Cysteine sulfenic acid (-SOH). Positions 452 and 455 each coordinate K(+). Glu459 serves as the catalytic Charge relay system.

Belongs to the aldehyde dehydrogenase family. In terms of assembly, dimer of dimers. Requires K(+) as cofactor.

The catalysed reaction is betaine aldehyde + NAD(+) + H2O = glycine betaine + NADH + 2 H(+). The protein operates within amine and polyamine biosynthesis; betaine biosynthesis via choline pathway; betaine from betaine aldehyde: step 1/1. In terms of biological role, involved in the biosynthesis of the osmoprotectant glycine betaine. Catalyzes the irreversible oxidation of betaine aldehyde to the corresponding acid. The polypeptide is Betaine aldehyde dehydrogenase (Marinomonas sp. (strain MWYL1)).